Here is a 368-residue protein sequence, read N- to C-terminus: Protein-glutamate methylesterase/protein-glutamine glutaminase 1 (368 aa).

The Response regulatory domain occupies 4–121 (KVLVVDDSGF…SRNPDKVRQL (118 aa)). Asp55 carries the 4-aspartylphosphate modification. A disordered region spans residues 138 to 176 (SLPPLPSATSSSHAPASSSSVGASARVGAGASPAPASTS). Over residues 144–176 (SATSSSHAPASSSSVGASARVGAGASPAPASTS) the composition is skewed to low complexity. Residues 172–368 (PASTSAAPKR…IGRHLVEACQ (197 aa)) enclose the CheB-type methylesterase domain. Residues Ser192, His219, and Asp312 contribute to the active site.

This sequence belongs to the CheB family. Phosphorylated by CheA. Phosphorylation of the N-terminal regulatory domain activates the methylesterase activity.

It localises to the cytoplasm. It carries out the reaction [protein]-L-glutamate 5-O-methyl ester + H2O = L-glutamyl-[protein] + methanol + H(+). It catalyses the reaction L-glutaminyl-[protein] + H2O = L-glutamyl-[protein] + NH4(+). Functionally, involved in chemotaxis. Part of a chemotaxis signal transduction system that modulates chemotaxis in response to various stimuli. Catalyzes the demethylation of specific methylglutamate residues introduced into the chemoreceptors (methyl-accepting chemotaxis proteins or MCP) by CheR. Also mediates the irreversible deamidation of specific glutamine residues to glutamic acid. In Pseudomonas aeruginosa (strain ATCC 15692 / DSM 22644 / CIP 104116 / JCM 14847 / LMG 12228 / 1C / PRS 101 / PAO1), this protein is Protein-glutamate methylesterase/protein-glutamine glutaminase 1.